A 415-amino-acid polypeptide reads, in one-letter code: Procollagen C-endopeptidase enhancer 2 (415 aa).

Positions 1 to 23 (MRGANAWAPLCLLLAAATQLSRQ) are cleaved as a signal peptide. Intrachain disulfides connect Cys33–Cys59, Cys86–Cys107, Cys154–Cys181, Cys208–Cys231, Cys297–Cys364, Cys301–Cys367, and Cys312–Cys415. 2 CUB domains span residues 33–144 (CGGI…FSAA) and 154–268 (CGGL…YIFR). One can recognise an NTR domain in the interval 297–415 (CQQKCRRTGT…LLDALKNKQC (119 aa)). Asn355 is a glycosylation site (N-linked (GlcNAc...) asparagine).

As to quaternary structure, interacts with heparin with high affinity, and type I or II collagen. Post-translationally, O-glycosylated; contains sialic acid. As to expression, highly expressed in the heart, trabecular meshwork, pituitary gland, bladder, mammary gland, trachea and placenta and weakly expressed in the brain. Expressed in cartilage.

Its subcellular location is the secreted. In terms of biological role, binds to the C-terminal propeptide of types I and II procollagens and may enhance the cleavage of that propeptide by BMP1. The polypeptide is Procollagen C-endopeptidase enhancer 2 (PCOLCE2) (Homo sapiens (Human)).